Consider the following 339-residue polypeptide: DNA-directed RNA polymerase subunit alpha (339 aa).

Positions 1 to 235 (MTIQKNWQEL…DQLNVFVNFE (235 aa)) are alpha N-terminal domain (alpha-NTD). Residues 251 to 339 (FNPAFLKKVD…ELAKRFEDHY (89 aa)) form an alpha C-terminal domain (alpha-CTD) region.

Belongs to the RNA polymerase alpha chain family. As to quaternary structure, homodimer. The RNAP catalytic core consists of 2 alpha, 1 beta, 1 beta' and 1 omega subunit. When a sigma factor is associated with the core the holoenzyme is formed, which can initiate transcription.

It catalyses the reaction RNA(n) + a ribonucleoside 5'-triphosphate = RNA(n+1) + diphosphate. Its function is as follows. DNA-dependent RNA polymerase catalyzes the transcription of DNA into RNA using the four ribonucleoside triphosphates as substrates. The chain is DNA-directed RNA polymerase subunit alpha from Rhodopseudomonas palustris (strain BisB5).